The chain runs to 254 residues: MEKKLPRRLEGKVAIVTASTQGIGFGITERFGLEGASVVVSSRKQANVDEAVAKLKSKGIDAYGIVCHVSNAQHRRNLVEKTVQKYGKIDIVVCNAAANPSTDPILSSKEAVLDKLWEINVKSSILLLQDMAPHLEKGSSVIFITSIAGFSPQGAMAMYGVTKTALLGLTKALAAEMAPDTRVNAVAPGFVPTHFASFITGSSEVREGIEEKTLLNRLGTTGDMAAAAAFLASDDSSYITGETLVVAGGMPSRL.

Position 15–39 (15–39 (IVTASTQGIGFGITERFGLEGASVV)) interacts with NADP(+). Substrate is bound at residue Ser-146. Catalysis depends on Tyr-159, which acts as the Proton acceptor. The Microbody targeting signal motif lies at 252–254 (SRL).

The protein belongs to the short-chain dehydrogenases/reductases (SDR) family.

The protein localises to the peroxisome. Involved with IBR3 and IBR10 in the peroxisomal beta-oxidation of indole-3-butyric acid (IBA) to form indole-3-acetic acid (IAA), a biologically active auxin. May be responsible for catalyzing the dehydrogenation step in the conversion of IBA. May be involved in the peroxisomal activation of 2,4-dichlorophenoxybutyric acid (2,4-DB), a precursor of active auxins that inhibit root growth. In Arabidopsis thaliana (Mouse-ear cress), this protein is Short-chain dehydrogenase/reductase SDRA.